Here is a 282-residue protein sequence, read N- to C-terminus: 2-dehydro-3-deoxyphosphooctonate aldolase (282 aa).

Belongs to the KdsA family.

Its subcellular location is the cytoplasm. The enzyme catalyses D-arabinose 5-phosphate + phosphoenolpyruvate + H2O = 3-deoxy-alpha-D-manno-2-octulosonate-8-phosphate + phosphate. It functions in the pathway carbohydrate biosynthesis; 3-deoxy-D-manno-octulosonate biosynthesis; 3-deoxy-D-manno-octulosonate from D-ribulose 5-phosphate: step 2/3. The protein operates within bacterial outer membrane biogenesis; lipopolysaccharide biosynthesis. This Shewanella sediminis (strain HAW-EB3) protein is 2-dehydro-3-deoxyphosphooctonate aldolase.